A 225-amino-acid chain; its full sequence is PKHD-type hydroxylase YbiX (225 aa).

One can recognise a Fe2OG dioxygenase domain in the interval 78–177 (TLSTPLFNRY…RVASFMWIQS (100 aa)). Fe cation contacts are provided by His-96, Asp-98, and His-158. Arg-168 provides a ligand contact to 2-oxoglutarate.

It depends on Fe(2+) as a cofactor. L-ascorbate serves as cofactor.

In Shigella boydii serotype 18 (strain CDC 3083-94 / BS512), this protein is PKHD-type hydroxylase YbiX.